The sequence spans 709 residues: Golgin-84 (709 aa).

Topologically, residues 1-664 are cytoplasmic; it reads MASWLKVAED…RATRFLWRHP (664 aa). 3 disordered regions span residues 24–132, 144–195, and 211–265; these read TELS…VVDR, EVEV…NQDA, and EVIH…DQLE. The span at 29-43 shows a compositional bias: low complexity; the sequence is EQSSPQPSGSSSQEG. Residues 78 to 89 show a composition bias toward basic and acidic residues; that stretch reads PPRERIKIEKIR. The span at 94-113 shows a compositional bias: low complexity; the sequence is VDSSSVDASASKPDVSSSDV. A compositionally biased stretch (basic and acidic residues) spans 114–132; that stretch reads KGLDDDGGAEKEEKVVVDR. A compositionally biased stretch (low complexity) spans 162–180; it reads DGAADSGNSEGAAESSAPS. Composition is skewed to basic and acidic residues over residues 211–222 and 248–265; these read EVIHEKNIKEVP and QQEH…DQLE. The stretch at 287-592 forms a coiled coil; it reads RVCAGLSSRL…AALEFQLEKS (306 aa). Residues 665–684 traverse the membrane as a helical; Signal-anchor for type II membrane protein segment; that stretch reads VARVSLLFYLVFVHLFLMYL. Over 685-707 the chain is Lumenal; sequence MHRLQDFASREGPTAMGGLANSD.

It localises to the golgi apparatus membrane. Its function is as follows. May be involved in maintaining Golgi structure and in intra-Golgi transport. This Oryza sativa subsp. japonica (Rice) protein is Golgin-84.